We begin with the raw amino-acid sequence, 251 residues long: Probable transcriptional regulatory protein MMAR_2098 (251 aa).

It belongs to the TACO1 family.

The protein localises to the cytoplasm. The chain is Probable transcriptional regulatory protein MMAR_2098 from Mycobacterium marinum (strain ATCC BAA-535 / M).